The chain runs to 428 residues: 3-phosphoshikimate 1-carboxyvinyltransferase (428 aa).

Residues lysine 23, serine 24, and arginine 28 each contribute to the 3-phosphoshikimate site. A phosphoenolpyruvate-binding site is contributed by lysine 23. Residues glycine 92 and arginine 120 each coordinate phosphoenolpyruvate. Serine 165, glutamine 167, aspartate 312, and lysine 339 together coordinate 3-phosphoshikimate. Glutamine 167 provides a ligand contact to phosphoenolpyruvate. The Proton acceptor role is filled by aspartate 312. 2 residues coordinate phosphoenolpyruvate: arginine 343 and arginine 384.

The protein belongs to the EPSP synthase family. As to quaternary structure, monomer.

The protein localises to the cytoplasm. It catalyses the reaction 3-phosphoshikimate + phosphoenolpyruvate = 5-O-(1-carboxyvinyl)-3-phosphoshikimate + phosphate. Its pathway is metabolic intermediate biosynthesis; chorismate biosynthesis; chorismate from D-erythrose 4-phosphate and phosphoenolpyruvate: step 6/7. Catalyzes the transfer of the enolpyruvyl moiety of phosphoenolpyruvate (PEP) to the 5-hydroxyl of shikimate-3-phosphate (S3P) to produce enolpyruvyl shikimate-3-phosphate and inorganic phosphate. The chain is 3-phosphoshikimate 1-carboxyvinyltransferase from Sulfurimonas denitrificans (strain ATCC 33889 / DSM 1251) (Thiomicrospira denitrificans (strain ATCC 33889 / DSM 1251)).